The sequence spans 156 residues: Small ribosomal subunit protein uS7 (156 aa).

Belongs to the universal ribosomal protein uS7 family. As to quaternary structure, part of the 30S ribosomal subunit. Contacts proteins S9 and S11.

Functionally, one of the primary rRNA binding proteins, it binds directly to 16S rRNA where it nucleates assembly of the head domain of the 30S subunit. Is located at the subunit interface close to the decoding center, probably blocks exit of the E-site tRNA. The chain is Small ribosomal subunit protein uS7 from Aliivibrio salmonicida (strain LFI1238) (Vibrio salmonicida (strain LFI1238)).